The primary structure comprises 550 residues: Glucose-6-phosphate isomerase 3 (550 aa).

Glu357 acts as the Proton donor in catalysis. Catalysis depends on residues His388 and Lys514.

This sequence belongs to the GPI family.

The protein localises to the cytoplasm. The catalysed reaction is alpha-D-glucose 6-phosphate = beta-D-fructose 6-phosphate. It participates in carbohydrate biosynthesis; gluconeogenesis. It functions in the pathway carbohydrate degradation; glycolysis; D-glyceraldehyde 3-phosphate and glycerone phosphate from D-glucose: step 2/4. Functionally, catalyzes the reversible isomerization of glucose-6-phosphate to fructose-6-phosphate. This Rhodococcus jostii (strain RHA1) protein is Glucose-6-phosphate isomerase 3.